Here is a 127-residue protein sequence, read N- to C-terminus: Evasin-4 (127 aa).

The N-terminal stretch at 1-23 (MAFKYWFVFAAVLYARQWLSTKC) is a signal peptide. Intrachain disulfides connect Cys-50–Cys-69, Cys-65–Cys-112, Cys-86–Cys-117, and Cys-107–Cys-126. N-linked (GlcNAc...) asparagine glycans are attached at residues Asn-54, Asn-64, Asn-70, Asn-77, Asn-83, Asn-106, and Asn-114.

It belongs to the evasin C8 family. As to quaternary structure, monomer.

It localises to the secreted. Its function is as follows. Salivary chemokine-binding protein which has chemokine-neutralizing activity and binds to host chemokines CCL1, CCL3, CCL5, CCL7, CCL8, CCL11, CCL14, CCL15, CCL16, CCL17, CCL18, CCL19, CCL21, CCL22, CCL23, CCL24, CCL25 and CCL26 with nanomolar affinity. Binds to CCL3 and CCL5 with 1:1 stoichiometry. Although binding to CCL25 is observed, does not inhibit CCL25-induced chemotaxis. Has been shown to reduce cardiac injury and inflammation in mice through its anti-CCL5 activity. This is Evasin-4 from Rhipicephalus sanguineus (Brown dog tick).